We begin with the raw amino-acid sequence, 334 residues long: Adenine deaminase (334 aa).

Histidine 17, histidine 19, and histidine 197 together coordinate Zn(2+). Glutamate 200 functions as the Proton donor in the catalytic mechanism. Aspartate 278 serves as a coordination point for Zn(2+). Position 279 (aspartate 279) interacts with substrate.

This sequence belongs to the metallo-dependent hydrolases superfamily. Adenosine and AMP deaminases family. Adenine deaminase type 2 subfamily. Requires Zn(2+) as cofactor.

It catalyses the reaction adenine + H2O + H(+) = hypoxanthine + NH4(+). Its function is as follows. Catalyzes the hydrolytic deamination of adenine to hypoxanthine. Plays an important role in the purine salvage pathway and in nitrogen catabolism. The chain is Adenine deaminase from Rhodospirillum rubrum (strain ATCC 11170 / ATH 1.1.1 / DSM 467 / LMG 4362 / NCIMB 8255 / S1).